The chain runs to 418 residues: Ciliary microtubule-associated protein 2 (418 aa).

As to expression, sperm.

The chain is Ciliary microtubule-associated protein 2 from Homo sapiens (Human).